The primary structure comprises 206 residues: 21.9 kDa heat shock protein (206 aa).

The first 29 residues, M1–A29, serve as a signal peptide directing secretion. One can recognise a sHSP domain in the interval E65 to D187. Positions R94–D96 match the Cell attachment site motif.

It belongs to the small heat shock protein (HSP20) family. May form oligomeric structures.

The protein resides in the endoplasmic reticulum. This is 21.9 kDa heat shock protein (HSP21.9) from Oryza sativa subsp. japonica (Rice).